The primary structure comprises 150 residues: D-aminoacyl-tRNA deacylase (150 aa).

The Gly-cisPro motif, important for rejection of L-amino acids motif lies at 140-141 (GP).

The protein belongs to the DTD family. As to quaternary structure, homodimer.

Its subcellular location is the cytoplasm. It catalyses the reaction glycyl-tRNA(Ala) + H2O = tRNA(Ala) + glycine + H(+). The enzyme catalyses a D-aminoacyl-tRNA + H2O = a tRNA + a D-alpha-amino acid + H(+). The catalysed reaction is D-tyrosyl-tRNA(Tyr) + H2O = D-tyrosine + tRNA(Tyr). In terms of biological role, an aminoacyl-tRNA editing enzyme that deacylates mischarged D-aminoacyl-tRNAs. Hydrolyzes D-tyrosyl-tRNA(Tyr) into D-tyrosine and free tRNA(Tyr). May also deacylate mischarged D-leucyl-tRNA(Leu). Also deacylates mischarged glycyl-tRNA(Ala), protecting cells against glycine mischarging by AlaRS. Acts via tRNA-based rather than protein-based catalysis; rejects L-amino acids rather than detecting D-amino acids in the active site. By recycling D-aminoacyl-tRNA to D-amino acids and free tRNA molecules, this enzyme counteracts the toxicity associated with the formation of D-aminoacyl-tRNA entities in vivo and helps enforce protein L-homochirality. In Saccharomyces cerevisiae (strain ATCC 204508 / S288c) (Baker's yeast), this protein is D-aminoacyl-tRNA deacylase.